A 468-amino-acid polypeptide reads, in one-letter code: Ribulose bisphosphate carboxylase large chain (468 aa).

Position 5 is an N6,N6,N6-trimethyllysine (Lys5). Positions 114 and 164 each coordinate substrate. Residue Lys166 is the Proton acceptor of the active site. Lys168 contacts substrate. Mg(2+)-binding residues include Lys192, Asp194, and Glu195. An N6-carboxylysine modification is found at Lys192. His285 serves as the catalytic Proton acceptor. Arg286, His318, and Ser370 together coordinate substrate.

Belongs to the RuBisCO large chain family. Type I subfamily. As to quaternary structure, heterohexadecamer of 8 large chains and 8 small chains; disulfide-linked. The disulfide link is formed within the large subunit homodimers. Requires Mg(2+) as cofactor. The disulfide bond which can form in the large chain dimeric partners within the hexadecamer appears to be associated with oxidative stress and protein turnover.

The protein localises to the plastid. It is found in the chloroplast. The enzyme catalyses 2 (2R)-3-phosphoglycerate + 2 H(+) = D-ribulose 1,5-bisphosphate + CO2 + H2O. It carries out the reaction D-ribulose 1,5-bisphosphate + O2 = 2-phosphoglycolate + (2R)-3-phosphoglycerate + 2 H(+). Functionally, ruBisCO catalyzes two reactions: the carboxylation of D-ribulose 1,5-bisphosphate, the primary event in carbon dioxide fixation, as well as the oxidative fragmentation of the pentose substrate in the photorespiration process. Both reactions occur simultaneously and in competition at the same active site. This Tecoma stans (Yellow bells) protein is Ribulose bisphosphate carboxylase large chain.